The primary structure comprises 165 residues: Ubiquitin-like protein 4B (165 aa).

Residues 1-76 (MFLTVKLLLG…ISVVVRPLEK (76 aa)) enclose the Ubiquitin-like domain. The disordered stretch occupies residues 139–165 (EPLAQPTGEREPEVLSPNKEEEKEAVQ). Over residues 146 to 165 (GEREPEVLSPNKEEEKEAVQ) the composition is skewed to basic and acidic residues.

It localises to the cytoplasm. The chain is Ubiquitin-like protein 4B (UBL4B) from Bos taurus (Bovine).